The following is a 1006-amino-acid chain: 5'-3' exoribonuclease 2 (1006 aa).

Coiled coils occupy residues 256–287 (FAQDNRKRNNLKDTINMTEEEKQFLQKQNSEQ) and 453–544 (RLKK…AESE). Residues 492 to 529 (DDAVSKANKTNFNLAEVMKQKIINKKHRLEKDNEEEEI) form a required for retention in the nucleus region. Basic and acidic residues predominate over residues 561–575 (DRENSETTEVSRDSP). 2 disordered regions span residues 561–584 (DRENSETTEVSRDSPVHSTVNVSE) and 939–1006 (HNYG…ANRR). Ser-574 carries the phosphoserine modification. The segment covering 939–956 (HNYGRNSYNSQPGFNNSR) has biased composition (polar residues). 6 tandem repeats follow at residues 955–958 (SRYD), 961–964 (NNNY), 972–974 (NNN), 975–978 (YSGN), 984–986 (YSG), and 996–999 (SRYD). The interval 955 to 999 (SRYDGGNNNYRQNSNYRNNNYSGNRNSGQYSGNSYSRNNKQSRYD) is 2 X 4 AA repeats of S-R-Y-D, N-N-N-Y, Y-S-G-N. The segment covering 959 to 993 (GGNNNYRQNSNYRNNNYSGNRNSGQYSGNSYSRNN) has biased composition (low complexity). Positions 996–1006 (SRYDNSRANRR) are enriched in basic and acidic residues.

The protein belongs to the 5'-3' exonuclease family. XRN2/RAT1 subfamily. Interacts with RAI1 and RTT103. Mg(2+) is required as a cofactor. Requires Mn(2+) as cofactor.

It localises to the nucleus. With respect to regulation, inhibited by nucleoside 3', 5'-bisphosphates. In terms of biological role, possesses 5'-&gt;3' exoribonuclease activity. Required for the processing of nuclear mRNA, rRNA and small nucleolar RNA (snoRNA) precursors. May promote termination of transcription by RNA polymerase II via the recruitment of 3'-end processing factors to the poly(A) site and by the degradation of nascent RNA downstream of the poly(A) site. This chain is 5'-3' exoribonuclease 2 (RAT1), found in Saccharomyces cerevisiae (strain ATCC 204508 / S288c) (Baker's yeast).